Reading from the N-terminus, the 145-residue chain is Deoxyuridine 5'-triphosphate nucleotidohydrolase (145 aa).

Substrate contacts are provided by residues 63-65 (RSG), N76, and 80-82 (TID).

Belongs to the dUTPase family. The cofactor is Mg(2+).

The enzyme catalyses dUTP + H2O = dUMP + diphosphate + H(+). Its pathway is pyrimidine metabolism; dUMP biosynthesis; dUMP from dCTP (dUTP route): step 2/2. Functionally, this enzyme is involved in nucleotide metabolism: it produces dUMP, the immediate precursor of thymidine nucleotides and it decreases the intracellular concentration of dUTP so that uracil cannot be incorporated into DNA. This Chlamydia pneumoniae (Chlamydophila pneumoniae) protein is Deoxyuridine 5'-triphosphate nucleotidohydrolase.